The sequence spans 791 residues: Organellar oligopeptidase A, chloroplastic/mitochondrial (791 aa).

The N-terminal 82 residues, 1–82, are a transit peptide targeting the chloroplast and mitochondrion; the sequence is MLMATPTSRA…SSPPSMSSAA (82 aa). Coiled-coil stretches lie at residues 118–138 and 239–259; these read RPGIRALLQHLEAELEELEKS and DDEKREEFNKIEQELEKLSHK. Residue histidine 571 coordinates Zn(2+). Glutamate 572 is an active-site residue. Zn(2+) is bound by residues histidine 575 and glutamate 601. Residue 703–709 coordinates substrate; it reads HIFAGGY.

The protein belongs to the peptidase M3 family. Zn(2+) serves as cofactor.

It is found in the mitochondrion matrix. The protein localises to the plastid. It localises to the chloroplast stroma. The enzyme catalyses Hydrolysis of oligopeptides, with broad specificity. Gly or Ala commonly occur as P1 or P1' residues, but more distant residues are also important, as is shown by the fact that Z-Gly-Pro-Gly-|-Gly-Pro-Ala is cleaved, but not Z-(Gly)(5).. With respect to regulation, inhibited by salicylic acid. In terms of biological role, oligopeptidase degrading short peptides from 8 to 23 amino acid residues. Plays a role in the degradation of transit peptides and of peptides derived from other proteolytic events. Does not exhibit a strict cleavage pattern. Binds salicylic acid. The protein is Organellar oligopeptidase A, chloroplastic/mitochondrial of Arabidopsis thaliana (Mouse-ear cress).